We begin with the raw amino-acid sequence, 224 residues long: Transcription cofactor HES-6 (224 aa).

The segment at 1–31 (MAPSQAPSRDRAGQEDEDRWEARGDRKARKP) is disordered. Residues 8–25 (SRDRAGQEDEDRWEARGD) are compositionally biased toward basic and acidic residues. The 53-residue stretch at 25 to 77 (DRKARKPLVEKKRRARINESLQELRLLLAGTEVQAKLENAEVLELTVRRVQGA) folds into the bHLH domain. The Orange domain occupies 96 to 129 (FAAGYIQCMHEVHTFVSTCQAIDATVSAELLNHL). Residues 146-209 (GDSLAGLPGG…GPDLVSTSLG (64 aa)) are disordered. Residues 158–171 (RSSWPPGGSPESPL) show a composition bias toward low complexity. Residues 181 to 190 (LCSDLEEIPE) show a composition bias toward acidic residues. The WRPW motif signature appears at 221-224 (WRPW).

Transcription repression requires formation of a complex with a corepressor protein of the Groucho/TLE family. Interacts with HES1. In terms of tissue distribution, expressed in both undifferentiated and differentiated cells. High levels of expression are observed in several embryonic tissues including the nervous system, muscle and thymus. In the nervous system, initially expressed in the closing neural tube, then in the spinal cord, cranial and dorsal root ganglia, and brain neuroepithelium. Also expressed in epithelial cells of the embryonic respiratory, urinary and digestive systems. In the limb buds, expressed in skeletal muscle and presumptive tendons.

It localises to the nucleus. Functionally, does not bind DNA itself but suppresses both HES1-mediated N box-dependent transcriptional repression and binding of HES1 to E box sequences. Also suppresses HES1-mediated inhibition of the heterodimer formed by ASCL1/MASH1 and TCF3/E47, allowing ASCL1 and TCF3 to up-regulate transcription in its presence. Promotes cell differentiation. The polypeptide is Transcription cofactor HES-6 (Mus musculus (Mouse)).